A 599-amino-acid polypeptide reads, in one-letter code: Retrotransposon Gag-like protein 5 (599 aa).

Disordered stretches follow at residues 77–97, 116–139, and 377–450; these read DPTP…CWPP, DYTN…ELHS, and FPQE…EEDE. Residues 78–90 show a composition bias toward acidic residues; it reads PTPEEEEEEEEEV. 2 stretches are compositionally biased toward acidic residues: residues 393-432 and 439-450; these read DEME…EDKE and DSDENKYEEEDE.

In Mus musculus (Mouse), this protein is Retrotransposon Gag-like protein 5.